Here is a 443-residue protein sequence, read N- to C-terminus: Transcription factor E2F2 (443 aa).

Residues 1–22 (MLRAPRTLAPATAQPTKSLPAL) form a disordered region. Positions 67–107 (ATPHGPEGQIVRCAPAGRLPAKRKLDLEGIGRPTVPEFRTP) are cyclin A/CDK2 binding. A DNA-binding region spans residues 109-198 (GKCIRVDGLP…KNNIQWVGRE (90 aa)). The interval 157–178 (LNWAAEVLDVQKRRIYDITNVL) is leucine-zipper. The DEF box motif lies at 162-198 (EVLDVQKRRIYDITNVLEGIQLIRKKSKNNIQWVGRE). The dimerization stretch occupies residues 199 to 291 (LFEDPTRPSR…PDRAEENLQI (93 aa)). A disordered region spans residues 306 to 341 (PEEGQEPDSPAKEALPSTSALSPIPDCAQPGCSTDS). A transactivation region spans residues 361–443 (PPPPLPPAPS…SYDLGDLLIN (83 aa)). A retinoblastoma protein binding region spans residues 416-433 (DEYLWGMDEGEGISDLFD).

This sequence belongs to the E2F/DP family. In terms of assembly, component of the DRTF1/E2F transcription factor complex. Forms heterodimers with DP family members. The E2F2 complex binds specifically hypophosphorylated retinoblastoma protein RB1. During the cell cycle, RB1 becomes phosphorylated in mid-to-late G1 phase, detaches from the DRTF1/E2F complex, rendering E2F transcriptionally active. Viral oncoproteins, notably E1A, T-antigen and HPV E7, are capable of sequestering RB protein, thus releasing the active complex. Binds EAPP. In terms of processing, phosphorylated by CDK2 and cyclin A-CDK2 in the S-phase.

The protein localises to the nucleus. In terms of biological role, transcription activator that binds DNA cooperatively with DP proteins through the E2 recognition site, 5'-TTTC[CG]CGC-3' found in the promoter region of a number of genes whose products are involved in cell cycle regulation or in DNA replication. The DRTF1/E2F complex functions in the control of cell-cycle progression from g1 to s phase. E2F2 binds specifically to RB1 in a cell-cycle dependent manner. This chain is Transcription factor E2F2 (E2f2), found in Mus musculus (Mouse).